A 351-amino-acid polypeptide reads, in one-letter code: Hydroxymethylglutaryl-CoA synthase (351 aa).

(3S)-3-hydroxy-3-methylglutaryl-CoA is bound at residue aspartate 28. Residue glutamate 80 is the Proton donor/acceptor of the active site. Positions 112 and 153 each coordinate (3S)-3-hydroxy-3-methylglutaryl-CoA. Cysteine 112 serves as the catalytic Acyl-thioester intermediate. Arginine 199 contacts CoA. Residues threonine 201 and histidine 234 each coordinate (3S)-3-hydroxy-3-methylglutaryl-CoA. Catalysis depends on histidine 234, which acts as the Proton donor/acceptor. Residue lysine 239 participates in CoA binding. Residues arginine 243, asparagine 266, and serine 296 each coordinate (3S)-3-hydroxy-3-methylglutaryl-CoA.

Belongs to the thiolase-like superfamily. Archaeal HMG-CoA synthase family. In terms of assembly, interacts with acetoacetyl-CoA thiolase that catalyzes the precedent step in the pathway and with a DUF35 protein. The acetoacetyl-CoA thiolase/HMG-CoA synthase complex channels the intermediate via a fused CoA-binding site, which allows for efficient coupling of the endergonic thiolase reaction with the exergonic HMGCS reaction.

It catalyses the reaction acetoacetyl-CoA + acetyl-CoA + H2O = (3S)-3-hydroxy-3-methylglutaryl-CoA + CoA + H(+). Its pathway is metabolic intermediate biosynthesis; (R)-mevalonate biosynthesis; (R)-mevalonate from acetyl-CoA: step 2/3. Its function is as follows. Catalyzes the condensation of acetyl-CoA with acetoacetyl-CoA to form 3-hydroxy-3-methylglutaryl-CoA (HMG-CoA). Functions in the mevalonate (MVA) pathway leading to isopentenyl diphosphate (IPP), a key precursor for the biosynthesis of isoprenoid compounds that are building blocks of archaeal membrane lipids. This Picrophilus torridus (strain ATCC 700027 / DSM 9790 / JCM 10055 / NBRC 100828 / KAW 2/3) protein is Hydroxymethylglutaryl-CoA synthase.